The primary structure comprises 376 residues: N-glycosylase/DNA lyase (376 aa).

Residues asparagine 134, arginine 139, and arginine 189 each contribute to the DNA site. Residue lysine 241 is the Schiff-base intermediate with DNA of the active site. Positions 258 and 260 each coordinate 8-oxoguanine. Histidine 262 provides a ligand contact to DNA. 8-oxoguanine contacts are provided by glutamine 320 and phenylalanine 324.

This sequence belongs to the type-1 OGG1 family.

It is found in the nucleus. The enzyme catalyses 2'-deoxyribonucleotide-(2'-deoxyribose 5'-phosphate)-2'-deoxyribonucleotide-DNA = a 3'-end 2'-deoxyribonucleotide-(2,3-dehydro-2,3-deoxyribose 5'-phosphate)-DNA + a 5'-end 5'-phospho-2'-deoxyribonucleoside-DNA + H(+). In terms of biological role, DNA repair enzyme that incises DNA at 8-oxoG residues. Excises 7,8-dihydro-8-oxoguanine and 2,6-diamino-4-hydroxy-5-N-methylformamidopyrimidine (FAPY) from damaged DNA. Has a beta-lyase activity that nicks DNA 3' to the lesion. The chain is N-glycosylase/DNA lyase (OGG1) from Saccharomyces cerevisiae (strain ATCC 204508 / S288c) (Baker's yeast).